A 513-amino-acid chain; its full sequence is Putative zinc finger CCCH domain-containing protein 51 (513 aa).

The tract at residues 155–180 (SMPRNSPNAGRNLVGHPHSSSKSSSK) is disordered. The segment covering 170–180 (HPHSSSKSSSK) has biased composition (low complexity). A C3H1-type zinc finger spans residues 176–204 (KSSSKPCHFHFFRGYCKKGVNCQFFHGSV). An HTH OST-type domain is found at 218-299 (SLSKLDMEIR…HGQYHVVLVE (82 aa)). The RRM domain occupies 325 to 411 (NQIYMTFPVH…SELRMTWLKS (87 aa)).

This is Putative zinc finger CCCH domain-containing protein 51 from Oryza sativa subsp. japonica (Rice).